We begin with the raw amino-acid sequence, 284 residues long: Tropomyosin-2 (284 aa).

A coiled-coil region spans residues 1–284 (MDAIKKKMQA…DQTFAELTGY (284 aa)). The tract at residues 82-110 (ESEVATQNRKVQQIEEDLEKSEERSTTAQ) is disordered.

The protein belongs to the tropomyosin family. As to quaternary structure, homodimer.

Tropomyosin, in association with the troponin complex, plays a central role in the calcium dependent regulation of muscle contraction. May also regulate motor systems required to maintain nuclear integrity and apico-basal polarity during embryogenesis. This is Tropomyosin-2 (Tm2) from Drosophila melanogaster (Fruit fly).